The primary structure comprises 480 residues: Vacuolar protein sorting-associated protein 9A (480 aa).

A VPS9 domain is found at 111 to 255; sequence VKSDEELFEK…IWNIDGESLS (145 aa). GTP is bound by residues Asn-189 and Asp-194. Residues 276 to 288 are compositionally biased toward polar residues; the sequence is SASSENQDNQNNL. Disordered regions lie at residues 276 to 338 and 418 to 480; these read SASS…VQSI and ESEE…PEHA. Over residues 289–305 the composition is skewed to basic and acidic residues; it reads DVREQKSQTLKASRDSD. Composition is skewed to polar residues over residues 327 to 338, 427 to 437, and 451 to 461; these read ASSNPVERVQSI, NAVNFSEGSSK, and VDNTGTQQTAV.

As to quaternary structure, interacts with RAB5A. Interacts with GPA3 (via C-terminus).

It is found in the cytoplasm. It localises to the golgi apparatus. Its subcellular location is the trans-Golgi network. The protein localises to the prevacuolar compartment. Its function is as follows. Functions as a guanine nucleotide exchange factor (GEF) for Rab small GTPases. Activates specifically RAB5A protein. Functions cooperatively with RAB5A to regulate post-Golgi dense vesicle-mediated transport of storage proteins to the type II protein bodies (PBII) protein storage vacuoles in developing endosperm. In Oryza sativa subsp. japonica (Rice), this protein is Vacuolar protein sorting-associated protein 9A.